Consider the following 289-residue polypeptide: Energy-coupling factor transporter ATP-binding protein EcfA2 (289 aa).

One can recognise an ABC transporter domain in the interval 3–246 (IEIKDVEHRY…KDDIAALGLD (244 aa)). 40–47 (GHTGSGKS) is a binding site for ATP.

The protein belongs to the ABC transporter superfamily. Energy-coupling factor EcfA family. In terms of assembly, forms a stable energy-coupling factor (ECF) transporter complex composed of 2 membrane-embedded substrate-binding proteins (S component), 2 ATP-binding proteins (A component) and 2 transmembrane proteins (T component).

It is found in the cell membrane. In terms of biological role, ATP-binding (A) component of a common energy-coupling factor (ECF) ABC-transporter complex. Unlike classic ABC transporters this ECF transporter provides the energy necessary to transport a number of different substrates. The polypeptide is Energy-coupling factor transporter ATP-binding protein EcfA2 (Bacillus licheniformis (strain ATCC 14580 / DSM 13 / JCM 2505 / CCUG 7422 / NBRC 12200 / NCIMB 9375 / NCTC 10341 / NRRL NRS-1264 / Gibson 46)).